The primary structure comprises 72 residues: MSKINVNVENVSGVQGFLFHTDGKESYGYRAFINGVEIGIKDIETVQGFQQIIPSINISKSDVEAIRKAMKK.

In terms of assembly, homooctamer. Part of the PlyC holoenzyme, which is composed of 1 PLYCA and 8 PLYCB assembled into a ring structure.

Functionally, component of the endolysin PlyC that degrades the host peptidoglycans and participates with the holin protein in the sequential events which lead to the programmed host cell lysis releasing the mature viral particles. Once the holin has permeabilized the host cell membrane, the endolysin can reach the periplasm and breaking down the peptidoglycan layer. The small subunit PlyCB is responsible for the specific binding of the endolysin to the host cell-wall, probably to the rhamnose of group A streptococcal carbohydrates. PlyCB is essential for lytic activity, cell wall binding is a prerequisite for cell lysis. The sequence is that of Endolysin PlyC, small cell-wall binding subunit (orf9dod) from Streptococcus phage C1.